The following is a 573-amino-acid chain: NEDD4-binding protein 3-B (573 aa).

3 disordered regions span residues 119–138, 173–220, and 384–405; these read EFSK…RFGP, CVGS…NSYS, and GENE…NLED. Basic and acidic residues predominate over residues 125 to 135; it reads LPERGHSDKSR. Positions 186 to 196 are enriched in low complexity; sequence SNSHSNNPSES. Composition is skewed to polar residues over residues 207-220 and 392-401; these read DSKQ…NSYS and KQSQSDNSGP. A coiled-coil region spans residues 287–474; it reads ESVEDVARQL…CLQALEDVKS (188 aa).

The protein belongs to the N4BP3 family.

The protein localises to the cytoplasmic vesicle. Its subcellular location is the cell projection. It is found in the axon. It localises to the dendrite. Plays a role in axon and dendrite arborization during cranial nerve development. Also important for neural crest migration and early development of other anterior structures including eye, brain and cranial cartilage. The protein is NEDD4-binding protein 3-B of Xenopus laevis (African clawed frog).